Consider the following 438-residue polypeptide: UDP-N-acetylmuramate--L-alanine ligase (438 aa).

108-114 (GAHGKTS) provides a ligand contact to ATP.

Belongs to the MurCDEF family.

It localises to the cytoplasm. The enzyme catalyses UDP-N-acetyl-alpha-D-muramate + L-alanine + ATP = UDP-N-acetyl-alpha-D-muramoyl-L-alanine + ADP + phosphate + H(+). It participates in cell wall biogenesis; peptidoglycan biosynthesis. In terms of biological role, cell wall formation. The polypeptide is UDP-N-acetylmuramate--L-alanine ligase (Oceanobacillus iheyensis (strain DSM 14371 / CIP 107618 / JCM 11309 / KCTC 3954 / HTE831)).